Reading from the N-terminus, the 416-residue chain is E3 ubiquitin-protein ligase DMA1 (416 aa).

A disordered region spans residues 1–30 (MSTNTVPSSPPNQTPPAASGIATSHDHTKF). Glycyl lysine isopeptide (Lys-Gly) (interchain with G-Cter in ubiquitin) cross-links involve residues Lys-150, Lys-204, Lys-217, Lys-237, Lys-240, Lys-260, Lys-300, Lys-306, Lys-313, and Lys-317. The FHA domain occupies 189–252 (IIIGRYTERV…SGTFLNHQRL (64 aa)). The RING-type zinc-finger motif lies at 327 to 371 (CSICLNKIKPCQAIFISPCAHSWHFHCVRRLVIMNYPQFMCPNCR).

Belongs to the DMA1 family. As to quaternary structure, interacts with CDC123. Interacts with PCL1. Post-translationally, UBC4-dependent autoubiquitination occurs at Lys-150, Lys-204, Lys-217, Lys-237, Lys-240, Lys-260, Lys-300, Lys-306, Lys-313 and Lys-317. UBC4-dependent autoubiquitination is responsible for DMA2 turnover. UBC13/MMS2-dependent autoubiquitination occurs at Lys-237 and Lys-306. Lys-204 and Lys-306 are also ubiquitinated in trans by DMA2 E3 ligase in association with UBC4.

Its subcellular location is the cytoplasm. The enzyme catalyses S-ubiquitinyl-[E2 ubiquitin-conjugating enzyme]-L-cysteine + [acceptor protein]-L-lysine = [E2 ubiquitin-conjugating enzyme]-L-cysteine + N(6)-ubiquitinyl-[acceptor protein]-L-lysine.. In terms of biological role, E3 ubiquitin-protein ligase which functions in cell cycle retarding in conjunction with the UBC4 and UBC13/MMS2 complex, 2 E2 ubiquitin conjugating enzymes. Involved in nutritional control of the cell cycle. Targets the G1 cyclin PCL1 for destruction. Required for proper spindle positioning, likely regulating septin ring deposition at the bud neck. This chain is E3 ubiquitin-protein ligase DMA1, found in Saccharomyces cerevisiae (strain ATCC 204508 / S288c) (Baker's yeast).